A 121-amino-acid polypeptide reads, in one-letter code: MEKSYVKFETPEDVSQKALDLVESSYRTGKVKKGTNEVIKSIERGESKLVVIAEDVNPPEVVYYLPSLCEDKKVPYVYVKKKADLGSKVGIASAASVSIVDYGKNEELYKSIVSALEQIKK.

This sequence belongs to the eukaryotic ribosomal protein eL8 family. In terms of assembly, part of the 50S ribosomal subunit. Probably part of the RNase P complex.

Its subcellular location is the cytoplasm. In terms of biological role, multifunctional RNA-binding protein that recognizes the K-turn motif in ribosomal RNA, the RNA component of RNase P, box H/ACA, box C/D and box C'/D' sRNAs. This chain is Large ribosomal subunit protein eL8, found in Thermoplasma acidophilum (strain ATCC 25905 / DSM 1728 / JCM 9062 / NBRC 15155 / AMRC-C165).